A 261-amino-acid chain; its full sequence is Major biofilm matrix component (261 aa).

The first 27 residues, 1–27 (MGMKKKLSLGVASAALGLALVGGGTWA), serve as a signal peptide directing secretion. A disordered region spans residues 241–261 (DHTDKDGYVKENEKAHSEDKN).

This sequence belongs to the peptidase M73 family. As to quaternary structure, forms fibers. Fibers have variable length and are 10-15 nm width. Interacts with obg (AC P20964) in pull-down experiments.

The protein localises to the secreted. The protein resides in the forespore intermembrane space. TasA is the major protein component of the biofilm extracellular matrix. It forms amyloid fibers that bind cells together in the biofilm. Exhibits an antibacterial activity against a variety of Gram-positive and Gram-negative bacteria. In laboratory strains, is also involved in proper spore coat assembly. The chain is Major biofilm matrix component from Bacillus subtilis (strain 168).